Reading from the N-terminus, the 535-residue chain is T-complex protein 1 subunit zeta 1 (535 aa).

The protein belongs to the TCP-1 chaperonin family. As to quaternary structure, heterooligomeric complex of about 850 to 900 kDa that forms two stacked rings, 12 to 16 nm in diameter.

Its subcellular location is the cytoplasm. Functionally, molecular chaperone; assists the folding of proteins upon ATP hydrolysis. Known to play a role, in vitro, in the folding of actin and tubulin. The chain is T-complex protein 1 subunit zeta 1 from Arabidopsis thaliana (Mouse-ear cress).